The chain runs to 344 residues: Arginine N-succinyltransferase (344 aa).

Leucine 125 is a succinyl-CoA binding site. The active-site Proton donor is histidine 229.

It belongs to the arginine N-succinyltransferase family.

The enzyme catalyses succinyl-CoA + L-arginine = N(2)-succinyl-L-arginine + CoA + H(+). It functions in the pathway amino-acid degradation; L-arginine degradation via AST pathway; L-glutamate and succinate from L-arginine: step 1/5. In terms of biological role, catalyzes the transfer of succinyl-CoA to arginine to produce N(2)-succinylarginine. The sequence is that of Arginine N-succinyltransferase from Escherichia coli O127:H6 (strain E2348/69 / EPEC).